We begin with the raw amino-acid sequence, 339 residues long: Phenylalanine--tRNA ligase alpha subunit (339 aa).

Residue Glu247 coordinates Mg(2+).

Belongs to the class-II aminoacyl-tRNA synthetase family. Phe-tRNA synthetase alpha subunit type 1 subfamily. As to quaternary structure, tetramer of two alpha and two beta subunits. Requires Mg(2+) as cofactor.

It localises to the cytoplasm. The enzyme catalyses tRNA(Phe) + L-phenylalanine + ATP = L-phenylalanyl-tRNA(Phe) + AMP + diphosphate + H(+). This chain is Phenylalanine--tRNA ligase alpha subunit, found in Deinococcus geothermalis (strain DSM 11300 / CIP 105573 / AG-3a).